The chain runs to 223 residues: Adenylate kinase 4, mitochondrial (223 aa).

15 to 20 (GSGKGT) is an a ribonucleoside 5'-triphosphate binding site. The interval 35 to 64 (SSGHFLRENIKASTEVGEMAKQYIEKSLLV) is NMP. AMP contacts are provided by Ser36 and Arg41. At Lys60 the chain carries N6-succinyllysine. AMP-binding positions include 62–64 (LLV), 89–92 (GFPR), and Gln96. Positions 125 to 162 (RRWIHPPSGRVYNLDFNPPHVHGIDDVTGEPLVQQEDD) are LID. Residues Arg126 and 135 to 136 (VY) each bind a ribonucleoside 5'-triphosphate. Position 170 (Arg170) interacts with AMP. Lys175 is modified (N6-acetyllysine). N6-acetyllysine; alternate occurs at positions 179 and 186. An N6-succinyllysine; alternate mark is found at Lys179 and Lys186. Thr199 provides a ligand contact to a ribonucleoside 5'-triphosphate.

Belongs to the adenylate kinase family. AK3 subfamily. Monomer. Interacts with SLC25A5/ANT2. As to expression, highly expressed in kidney, moderately expressed in heart and liver and weakly expressed in brain.

The protein resides in the mitochondrion matrix. The enzyme catalyses a ribonucleoside 5'-phosphate + ATP = a ribonucleoside 5'-diphosphate + ADP. The catalysed reaction is AMP + ATP = 2 ADP. It carries out the reaction GTP + AMP = GDP + ADP. It catalyses the reaction CMP + ATP = CDP + ADP. The enzyme catalyses GTP + CMP = CDP + GDP. The catalysed reaction is dAMP + ATP = dADP + ADP. It carries out the reaction dCMP + ATP = dCDP + ADP. It catalyses the reaction a 2'-deoxyribonucleoside 5'-diphosphate + ATP = a 2'-deoxyribonucleoside 5'-triphosphate + ADP. The enzyme catalyses a ribonucleoside 5'-diphosphate + ATP = a ribonucleoside 5'-triphosphate + ADP. The catalysed reaction is GDP + ATP = GTP + ADP. It carries out the reaction CDP + GTP = CTP + GDP. It catalyses the reaction CDP + ATP = CTP + ADP. The enzyme catalyses UDP + ATP = UTP + ADP. The catalysed reaction is GTP + UDP = UTP + GDP. It carries out the reaction dADP + GTP = dATP + GDP. It catalyses the reaction dCDP + GTP = dCTP + GDP. The enzyme catalyses dCDP + ATP = dCTP + ADP. The catalysed reaction is dGDP + ATP = dGTP + ADP. It carries out the reaction dTDP + GTP = dTTP + GDP. It catalyses the reaction dTDP + ATP = dTTP + ADP. Functionally, broad-specificity mitochondrial nucleoside phosphate kinase involved in cellular nucleotide homeostasis by catalyzing nucleoside-phosphate interconversions. Similar to other adenylate kinases, preferentially catalyzes the phosphorylation of the nucleoside monophosphate AMP with ATP as phosphate donor to produce ADP. Phosphorylates only AMP when using GTP as phosphate donor. In vitro, can also catalyze the phosphorylation of CMP, dAMP and dCMP and use GTP as an alternate phosphate donor. Moreover, exhibits a diphosphate kinase activity, producing ATP, CTP, GTP, UTP, TTP, dATP, dCTP and dGTP from the corresponding diphosphate substrates with either ATP or GTP as phosphate donors. Plays a role in controlling cellular ATP levels by regulating phosphorylation and activation of the energy sensor protein kinase AMPK. Plays a protective role in the cellular response to oxidative stress. The chain is Adenylate kinase 4, mitochondrial from Homo sapiens (Human).